Reading from the N-terminus, the 409-residue chain is Putative protein disulfide-isomerase DDB_G0275025 (409 aa).

The first 21 residues, 1–21 (MKLINICIFIFAIICIESTFG), serve as a signal peptide directing secretion. A Thioredoxin domain is found at 28-140 (NVINLTKKNF…AKFSLAKLPS (113 aa)). An intrachain disulfide couples cysteine 57 to cysteine 60. The disordered stretch occupies residues 245–273 (SNNDNNNNNNNNNNEESTKTTTTEKDPAS). Positions 247 to 259 (NDNNNNNNNNNNE) are enriched in low complexity. Residues 260–273 (ESTKTTTTEKDPAS) show a composition bias toward basic and acidic residues. Residues 406-409 (KDEL) carry the Prevents secretion from ER motif.

It belongs to the protein disulfide isomerase family.

It localises to the endoplasmic reticulum lumen. It catalyses the reaction Catalyzes the rearrangement of -S-S- bonds in proteins.. The chain is Putative protein disulfide-isomerase DDB_G0275025 from Dictyostelium discoideum (Social amoeba).